The following is a 652-amino-acid chain: Thioredoxin reductase 3 (652 aa).

The segment covering 1–12 (MEKPPSPPPPPR) has biased composition (pro residues). The tract at residues 1 to 62 (MEKPPSPPPP…TSRPSSEARE (62 aa)) is disordered. At R34 the chain carries Asymmetric dimethylarginine; alternate. An Omega-N-methylarginine; alternate modification is found at R34. The residue at position 50 (S50) is a Phosphoserine. One can recognise a Glutaredoxin domain in the interval 65–165 (RRRLRDLIEG…KLLQDDSAHD (101 aa)). 167-196 (DLIIIGGGSGGLSCAKEAANLGKKVMVLDF) lines the FAD pocket. C212 and C217 form a disulfide bridge. K388 carries the post-translational modification N6-succinyllysine. Catalysis depends on H625, which acts as the Proton acceptor. Positions 650–651 (CU) form a cross-link, cysteinyl-selenocysteine (Cys-Sec). A non-standard amino acid (selenocysteine) is located at residue U651.

It belongs to the class-I pyridine nucleotide-disulfide oxidoreductase family. As to quaternary structure, homodimer. FAD serves as cofactor. As to expression, expressed preferentially in testis where it is found in spermatids and spermatocytes but not in sperm. In elongating spermatids, expressed at the site of mitochondrial sheath formation. Low levels in other tissues including heart, lung, liver, kidney, brain, muscle and prostate.

Its subcellular location is the cytoplasm. The protein resides in the nucleus. The protein localises to the microsome. It is found in the endoplasmic reticulum. It carries out the reaction [thioredoxin]-dithiol + NADP(+) = [thioredoxin]-disulfide + NADPH + H(+). In terms of biological role, displays thioredoxin reductase, glutaredoxin and glutathione reductase activities. Catalyzes disulfide bond isomerization. Promotes disulfide bond formation between GPX4 and various sperm proteins and may play a role in sperm maturation by promoting formation of sperm structural components. This chain is Thioredoxin reductase 3, found in Mus musculus (Mouse).